The primary structure comprises 239 residues: Putative ankyrin repeat protein RBE_0489 (239 aa).

3 ANK repeats span residues Ile-23–Ala-52, Gly-80–Ala-109, and Phe-113–Leu-143.

In Rickettsia bellii (strain RML369-C), this protein is Putative ankyrin repeat protein RBE_0489.